A 417-amino-acid chain; its full sequence is Serine hydroxymethyltransferase (417 aa).

(6S)-5,6,7,8-tetrahydrofolate-binding positions include L112 and 116–118 (GHL). K221 bears the N6-(pyridoxal phosphate)lysine mark. E247 lines the (6S)-5,6,7,8-tetrahydrofolate pocket.

Belongs to the SHMT family. In terms of assembly, homodimer. The cofactor is pyridoxal 5'-phosphate.

Its subcellular location is the cytoplasm. The enzyme catalyses (6R)-5,10-methylene-5,6,7,8-tetrahydrofolate + glycine + H2O = (6S)-5,6,7,8-tetrahydrofolate + L-serine. Its pathway is one-carbon metabolism; tetrahydrofolate interconversion. It participates in amino-acid biosynthesis; glycine biosynthesis; glycine from L-serine: step 1/1. Functionally, catalyzes the reversible interconversion of serine and glycine with tetrahydrofolate (THF) serving as the one-carbon carrier. This reaction serves as the major source of one-carbon groups required for the biosynthesis of purines, thymidylate, methionine, and other important biomolecules. Also exhibits THF-independent aldolase activity toward beta-hydroxyamino acids, producing glycine and aldehydes, via a retro-aldol mechanism. This is Serine hydroxymethyltransferase from Borreliella burgdorferi (strain ATCC 35210 / DSM 4680 / CIP 102532 / B31) (Borrelia burgdorferi).